The primary structure comprises 326 residues: MKNIAIIGASGYTGAQLTALVHAESELSIQGLYVSENSLDKGRALADLYPVYSHIDLALSPLTEEAKAKIVAEADAVVLATEHSVSLHLAAWFYNQGLAVFDLSGAYRFSDVAQYPKWYGFEHEYPEVLAKAVYGLAEWNAKEVAATKMIAVPGCYPTASLTALKPLKNLLTSAYPVINAVSGVTGAGRKAQLHTSFCEVSLTPYGVLGHRHQPEIATQLGQEVIFTPHLGNFKRGILATITVQLKPGTTTADVAAAYSVYDQAPLVTVKQNQFPKVDDVVLTPNCHLGWKFDENSGYLVVASAIDNLMKGAASQALQCIKIHFNL.

The active site involves Cys155.

It belongs to the NAGSA dehydrogenase family. Type 1 subfamily.

It is found in the cytoplasm. The enzyme catalyses N-acetyl-L-glutamate 5-semialdehyde + phosphate + NADP(+) = N-acetyl-L-glutamyl 5-phosphate + NADPH + H(+). It functions in the pathway amino-acid biosynthesis; L-arginine biosynthesis; N(2)-acetyl-L-ornithine from L-glutamate: step 3/4. Catalyzes the NADPH-dependent reduction of N-acetyl-5-glutamyl phosphate to yield N-acetyl-L-glutamate 5-semialdehyde. The chain is N-acetyl-gamma-glutamyl-phosphate reductase from Shewanella sp. (strain MR-4).